The sequence spans 351 residues: D-alanine--D-alanine ligase (351 aa).

Residues 135–344 (KMAFAQAGLP…FAELVDQLIQ (210 aa)) enclose the ATP-grasp domain. 171 to 226 (EQRLGYPCFVKPANLGSSVGIAKVRSRSELEKALDSAASYDRRIVIETGVKAREVE) provides a ligand contact to ATP. Asp-297, Glu-311, and Asn-313 together coordinate Mg(2+).

This sequence belongs to the D-alanine--D-alanine ligase family. The cofactor is Mg(2+). Mn(2+) is required as a cofactor.

Its subcellular location is the cytoplasm. The enzyme catalyses 2 D-alanine + ATP = D-alanyl-D-alanine + ADP + phosphate + H(+). Its pathway is cell wall biogenesis; peptidoglycan biosynthesis. Cell wall formation. In Rippkaea orientalis (strain PCC 8801 / RF-1) (Cyanothece sp. (strain PCC 8801)), this protein is D-alanine--D-alanine ligase.